Consider the following 462-residue polypeptide: Chitinase-like mite allergen Der p 18.0101 (462 aa).

A signal peptide spans 1-25 (MTRLSFTVLIFLAAYFGSNIRPNVA). In terms of domain architecture, GH18 spans 29–378 (PKTVCYYESW…HAINSNYFRG (350 aa)). A disulfide bridge links cysteine 33 with cysteine 58. N-linked (GlcNAc...) asparagine glycans are attached at residues asparagine 338 and asparagine 441. Residues 404–462 (VFHCHQEGFFRDKTYCAKYYECKKGDFGLEQTVHHCPNHSQAFDEVSRTCVDHAKIPGC) form the Chitin-binding type-2 domain. Residues cysteine 439 and cysteine 453 are joined by a disulfide bond.

It belongs to the glycosyl hydrolase 18 family. Chitinase class II subfamily. Expressed in the peritrophic matrix of the midgut, and only very weakly in fecal pellets.

It is found in the secreted. Its function is as follows. Probably a non-catalytic chitinase-like protein, which binds to insoluble chitin and enhances the activity of the catalytic chitinases. Has weak chitin-binding activity. The chain is Chitinase-like mite allergen Der p 18.0101 from Dermatophagoides pteronyssinus (European house dust mite).